The sequence spans 479 residues: Altronate oxidoreductase (479 aa).

Residue 18-29 participates in NAD(+) binding; that stretch reads IIQFGEGNFLRA.

Belongs to the mannitol dehydrogenase family. UxaB subfamily.

It catalyses the reaction D-altronate + NAD(+) = keto-D-tagaturonate + NADH + H(+). Its pathway is carbohydrate metabolism; pentose and glucuronate interconversion. The sequence is that of Altronate oxidoreductase from Phocaeicola vulgatus (strain ATCC 8482 / DSM 1447 / JCM 5826 / CCUG 4940 / NBRC 14291 / NCTC 11154) (Bacteroides vulgatus).